A 372-amino-acid polypeptide reads, in one-letter code: MLVAVVKELKQGEGRVACTPENVRKLTDAGHKVIVEKNAGIGSGFSNDMYEKEGAKIVTHEQAWEADLVIKVKEPHESEYQYFKKNQIIWGFLHLASSKEIVEKMQEVGVTAISGETIIKNGKAELLAPMSAIAGQRSAIMGAYYSEAQHGGQGTLVTGVHENVDIPGSTYVIFGGGVAATNAANVALGLNAKVIIIELNDDRIKYLEDMYAEKDVTVVKSTPENLAEQIKKADVFISTILISGAKPPKLVTREMVKSMKKGSVLIDIAIDQGGTIETIRPTTISDPVYEEEGVIHYGVPNQPGAVPRTSTMALAQGNIDYILEICDKGLEQAIKDNEALSTGVNIYQGQVTNQGLASSHDLDYKEILNVIE.

His94 is a catalytic residue. 170–200 (TYVIFGGGVAATNAANVALGLNAKVIIIELN) contributes to the NAD(+) binding site.

Belongs to the AlaDH/PNT family.

It carries out the reaction L-alanine + NAD(+) + H2O = pyruvate + NH4(+) + NADH + H(+). It participates in amino-acid degradation; L-alanine degradation via dehydrogenase pathway; NH(3) and pyruvate from L-alanine: step 1/1. Its function is as follows. May play a role in cell wall synthesis as L-alanine is an important constituent of the peptidoglycan layer. This is Alanine dehydrogenase 1 (ald1) from Staphylococcus aureus (strain NCTC 8325 / PS 47).